The primary structure comprises 238 residues: Major prion protein (238 aa).

A signal peptide spans 1–15 (MLVLFVATWSDLGLC). An interaction with GRB2, ERI3 and SYN1 region spans residues 16–215 (KKRPKPGGWN…ESQAYYQRGS (200 aa)). The disordered stretch occupies residues 18–93 (RPKPGGWNTG…WHKPSKPKTS (76 aa)). A run of 4 repeats spans residues 44-52 (PQGGGGWGQ), 53-60 (PHGGGWGQ), 61-68 (PHGGGWGQ), and 69-76 (PHGGGWGQ). Residues 44 to 83 (PQGGGGWGQPHGGGWGQPHGGGWGQPHGGGWGQGGGTHNQ) form a 4 X 8 AA tandem repeats of P-H-G-G-G-W-G-Q region. Residues 45-80 (QGGGGWGQPHGGGWGQPHGGGWGQPHGGGWGQGGGT) are compositionally biased toward gly residues. The Cu(2+) site is built by glycine 47, glycine 48, histidine 54, glycine 55, glycine 56, histidine 62, glycine 63, glycine 64, histidine 70, glycine 71, and glycine 72. The segment covering 83 to 93 (QWHKPSKPKTS) has biased composition (basic residues). Cysteine 164 and cysteine 199 are disulfide-bonded. N-linked (GlcNAc...) asparagine glycans are attached at residues asparagine 166 and asparagine 182. A lipid anchor (GPI-anchor amidated serine) is attached at serine 215. The propeptide at 216 to 238 (SIVLFSSPPVILLISFLIFLIVG) is removed in mature form.

Belongs to the prion family. As to quaternary structure, monomer and homodimer. Has a tendency to aggregate into amyloid fibrils containing a cross-beta spine, formed by a steric zipper of superposed beta-strands. Soluble oligomers may represent an intermediate stage on the path to fibril formation. Copper binding may promote oligomerization. Interacts with GRB2, APP, ERI3/PRNPIP and SYN1. Mislocalized cytosolically exposed PrP interacts with MGRN1; this interaction alters MGRN1 subcellular location and causes lysosomal enlargement. Interacts with KIAA1191.

The protein localises to the cell membrane. It is found in the golgi apparatus. Functionally, its primary physiological function is unclear. Has cytoprotective activity against internal or environmental stresses. May play a role in neuronal development and synaptic plasticity. May be required for neuronal myelin sheath maintenance. May play a role in iron uptake and iron homeostasis. Soluble oligomers are toxic to cultured neuroblastoma cells and induce apoptosis (in vitro). Association with GPC1 (via its heparan sulfate chains) targets PRNP to lipid rafts. Also provides Cu(2+) or Zn(2+) for the ascorbate-mediated GPC1 deaminase degradation of its heparan sulfate side chains. The protein is Major prion protein (PRNP) of Theropithecus gelada (Gelada baboon).